The sequence spans 1091 residues: Error-prone DNA polymerase (1091 aa).

The interval 1-51 is disordered; the sequence is MGWSNGPPSWAEMERVLNGKPRHAGVPAFDADGDVPRSRKRGAYQPPGRER.

This sequence belongs to the DNA polymerase type-C family. DnaE2 subfamily.

It localises to the cytoplasm. It carries out the reaction DNA(n) + a 2'-deoxyribonucleoside 5'-triphosphate = DNA(n+1) + diphosphate. In terms of biological role, DNA polymerase involved in damage-induced mutagenesis and translesion synthesis (TLS). It is not the major replicative DNA polymerase. The sequence is that of Error-prone DNA polymerase from Mycobacterium bovis (strain ATCC BAA-935 / AF2122/97).